The primary structure comprises 340 residues: DnaJ homolog subfamily B member 1 (340 aa).

The 69-residue stretch at 2 to 70 (GKDYYQTLGL…REIFDRYGEE (69 aa)) folds into the J domain. Phosphothreonine is present on threonine 307.

In terms of assembly, interacts with DNAJC3. Interacts with HSF1 (via transactivation domain); this interaction results in the inhibition of heat shock- and HSF1-induced transcriptional activity during the attenuation and recovery phase period of the heat shock response. Interacts with BAG3.

The protein resides in the cytoplasm. The protein localises to the nucleus. It is found in the nucleolus. In terms of biological role, interacts with HSP70 and can stimulate its ATPase activity. Stimulates the association between HSC70 and HIP. Negatively regulates heat shock-induced HSF1 transcriptional activity during the attenuation and recovery phase period of the heat shock response. Stimulates ATP hydrolysis and the folding of unfolded proteins mediated by HSPA1A/B (in vitro). This chain is DnaJ homolog subfamily B member 1 (DNAJB1), found in Homo sapiens (Human).